The sequence spans 647 residues: MSNRKQARLEAKQFIDTLSVQPYPNSTKVYVEGSRSDIRVPMREISLADSLVGGTKEAPIFQPNEAVRVYDTSGVYTDPTHQIDLYNGLPKLREEWIAERADTEVLDDVSSVYTKERLEDETLDELRYGNLPRIRRAKAGYCVTQLHYARKGIITPEMEYIALRENMGRAKYQDEVLTQQHAGQSFGANLPKEITPEFVRREVAEGRAIIPSNINHPESEPMIIGRNFLVKVNANIGNSSVTSSIEEEVEKLVWSTRWGGDTVMDLSTGRNIHETREWILRNSPVPIGTVPMYQALEKVNGVAENLTWEVMRDTLIEQAEQGVDYFTIHAGLLLRYIPMTAKRVTGIVSRGGSIIAKWCLAHHQESFLYTHFREICEICAKYDVALSLGDGLRPGSIADANDEAQFAELRTLGELTKIAWEYDVQVIIEGPGHVPMHMIKENMDEQLKHCHEAPFYTLGPLTTDIAPGYDHITSGIGAAMIGWYGCAMLCYVTPKEHLGLPNKEDVKTGLITYKLAAHAADLAKGHPGAQVRDNALSKARFEFRWQDQFNLSLDPDTARAFHDETLPQESGKVAHFCSMCGPKFCSMKISQEVREYAKGQQGEAGQAIEVKLLDDPLEGMKQKSAEFKASGSELYHPAVSHEEVAEG.

Residues Asn235, Met264, Tyr293, His329, 349 to 351 (SRG), 390 to 393 (DGLR), and Glu429 each bind substrate. Zn(2+) is bound at residue His433. Tyr456 provides a ligand contact to substrate. His497 is a Zn(2+) binding site. [4Fe-4S] cluster contacts are provided by Cys577, Cys580, and Cys585. Positions 623-647 (KSAEFKASGSELYHPAVSHEEVAEG) are disordered.

Belongs to the ThiC family. As to quaternary structure, homodimer. Requires [4Fe-4S] cluster as cofactor.

The catalysed reaction is 5-amino-1-(5-phospho-beta-D-ribosyl)imidazole + S-adenosyl-L-methionine = 4-amino-2-methyl-5-(phosphooxymethyl)pyrimidine + CO + 5'-deoxyadenosine + formate + L-methionine + 3 H(+). The protein operates within cofactor biosynthesis; thiamine diphosphate biosynthesis. Functionally, catalyzes the synthesis of the hydroxymethylpyrimidine phosphate (HMP-P) moiety of thiamine from aminoimidazole ribotide (AIR) in a radical S-adenosyl-L-methionine (SAM)-dependent reaction. The chain is Phosphomethylpyrimidine synthase from Vibrio vulnificus (strain CMCP6).